The primary structure comprises 185 residues: MAKYDKADLERRMKGAVESLRGDLSGLRTGRANTALLDPIVVEVYGSHMPLAQVATVSAPEPRLLSVQVWDKSNVTPVEKAIRSAGLGLNPISDGNTLRLPIPDLTEERRKELAKLASKYAENARIAIRNVRRDGMDALKADESKKEISEDERKRAETDLQKLTDDIIKQADEAAAAKEKEILGK.

Belongs to the RRF family.

The protein resides in the cytoplasm. Its function is as follows. Responsible for the release of ribosomes from messenger RNA at the termination of protein biosynthesis. May increase the efficiency of translation by recycling ribosomes from one round of translation to another. The protein is Ribosome-recycling factor of Novosphingobium aromaticivorans (strain ATCC 700278 / DSM 12444 / CCUG 56034 / CIP 105152 / NBRC 16084 / F199).